Consider the following 385-residue polypeptide: Tryptophan--tRNA ligase (385 aa).

Residues 82–90 (PSGPMHIGH) carry the 'HIGH' region motif. The 'KMSKS' region signature appears at 253–257 (KMSAS).

The protein belongs to the class-I aminoacyl-tRNA synthetase family.

It is found in the cytoplasm. The catalysed reaction is tRNA(Trp) + L-tryptophan + ATP = L-tryptophyl-tRNA(Trp) + AMP + diphosphate + H(+). The sequence is that of Tryptophan--tRNA ligase from Pyrococcus furiosus (strain ATCC 43587 / DSM 3638 / JCM 8422 / Vc1).